The chain runs to 233 residues: Large ribosomal subunit protein uL1 (233 aa).

Belongs to the universal ribosomal protein uL1 family. In terms of assembly, part of the 50S ribosomal subunit.

Binds directly to 23S rRNA. The L1 stalk is quite mobile in the ribosome, and is involved in E site tRNA release. Its function is as follows. Protein L1 is also a translational repressor protein, it controls the translation of the L11 operon by binding to its mRNA. This Psychrobacter sp. (strain PRwf-1) protein is Large ribosomal subunit protein uL1.